The following is a 459-amino-acid chain: Exodeoxyribonuclease 7 large subunit (459 aa).

This sequence belongs to the XseA family. Heterooligomer composed of large and small subunits.

It localises to the cytoplasm. It catalyses the reaction Exonucleolytic cleavage in either 5'- to 3'- or 3'- to 5'-direction to yield nucleoside 5'-phosphates.. Functionally, bidirectionally degrades single-stranded DNA into large acid-insoluble oligonucleotides, which are then degraded further into small acid-soluble oligonucleotides. The chain is Exodeoxyribonuclease 7 large subunit from Pseudomonas savastanoi pv. phaseolicola (strain 1448A / Race 6) (Pseudomonas syringae pv. phaseolicola (strain 1448A / Race 6)).